The chain runs to 508 residues: Maturase K (508 aa).

It belongs to the intron maturase 2 family. MatK subfamily.

It is found in the plastid. The protein localises to the chloroplast. In terms of biological role, usually encoded in the trnK tRNA gene intron. Probably assists in splicing its own and other chloroplast group II introns. This Verbena rigida (Tuberous vervain) protein is Maturase K.